The following is a 133-amino-acid chain: DNA-directed RNA polymerases I, II, and III subunit rpabc2 (133 aa).

Positions 1–32 (MADFEGGGDDGGYEEFDEGGGFEEEYVEETET) are enriched in acidic residues. The segment at 1 to 55 (MADFEGGGDDGGYEEFDEGGGFEEEYVEETETTEAYTDIIDPSADANTAEAGRIP) is disordered.

It belongs to the archaeal Rpo6/eukaryotic RPB6 RNA polymerase subunit family. As to quaternary structure, component of the RNA polymerase I (Pol I), RNA polymerase II (Pol II) and RNA polymerase III (Pol III) complexes consisting of at least 13, 12 and 17 subunits, respectively.

The protein localises to the nucleus. DNA-dependent RNA polymerases catalyze the transcription of DNA into RNA using the four ribonucleoside triphosphates as substrates. Common component of RNA polymerases I, II and III which synthesize ribosomal RNA precursors, mRNA precursors and many functional non-coding RNAs, and small RNAs, such as 5S rRNA and tRNAs, respectively. Pol II is the central component of the basal RNA polymerase II transcription machinery. Pols are composed of mobile elements that move relative to each other. In Pol II, RPB6 is part of the clamp element and together with parts of RPB1 and RPB2 forms a pocket to which the RPB4-RPB7 subcomplex binds. The chain is DNA-directed RNA polymerases I, II, and III subunit rpabc2 (polr2f) from Dictyostelium discoideum (Social amoeba).